The following is a 283-amino-acid chain: NAD kinase (283 aa).

The active-site Proton acceptor is Asp67. NAD(+)-binding positions include 67-68, 141-142, Arg152, Asp171, 182-187, and Gln241; these read DG, ND, and TAYSLS.

This sequence belongs to the NAD kinase family. The cofactor is a divalent metal cation.

The protein resides in the cytoplasm. It carries out the reaction NAD(+) + ATP = ADP + NADP(+) + H(+). Functionally, involved in the regulation of the intracellular balance of NAD and NADP, and is a key enzyme in the biosynthesis of NADP. Catalyzes specifically the phosphorylation on 2'-hydroxyl of the adenosine moiety of NAD to yield NADP. This Heliobacterium modesticaldum (strain ATCC 51547 / Ice1) protein is NAD kinase.